Here is a 105-residue protein sequence, read N- to C-terminus: N(4)-acetylcytidine amidohydrolase (105 aa).

Residues 7 to 93 enclose the ASCH domain; sequence TFFERFEHDI…VIAEIYPGLE (87 aa). Lysine 21 serves as the catalytic Proton acceptor. The active-site Nucleophile is threonine 24. Glutamate 74 functions as the Proton donor in the catalytic mechanism.

This sequence belongs to the N(4)-acetylcytidine amidohydrolase family.

The enzyme catalyses N(4)-acetylcytidine + H2O = cytidine + acetate + H(+). The catalysed reaction is N(4)-acetyl-2'-deoxycytidine + H2O = 2'-deoxycytidine + acetate + H(+). It carries out the reaction N(4)-acetylcytosine + H2O = cytosine + acetate + H(+). Its function is as follows. Catalyzes the hydrolysis of N(4)-acetylcytidine (ac4C). In Shewanella baltica (strain OS155 / ATCC BAA-1091), this protein is N(4)-acetylcytidine amidohydrolase.